The chain runs to 710 residues: Homeobox-leucine zipper protein ROC8 (710 aa).

The interval 1-23 (MDFGDEPEGSDSQRRRKRYHRHT) is disordered. Basic residues predominate over residues 14–23 (RRRKRYHRHT). The homeobox DNA-binding region spans 15–74 (RRKRYHRHTPRQIQQLEAMFKECPHPDENQRAQLSRELGLEPRQIKFWFQNRRTQMKAQH). The stretch at 82 to 144 (LRAENDKIRC…DRVSNLTSKY (63 aa)) forms a coiled coil. An START domain is found at 197–440 (SDMERPMMAE…LQRACERYAS (244 aa)). Over residues 630-648 (RPGSAAGASTSSAGPLAAA) the composition is skewed to low complexity. The interval 630–650 (RPGSAAGASTSSAGPLAAARG) is disordered.

This sequence belongs to the HD-ZIP homeobox family. Class IV subfamily.

It localises to the nucleus. In terms of biological role, probable transcription factor. This chain is Homeobox-leucine zipper protein ROC8 (ROC8), found in Oryza sativa subsp. japonica (Rice).